We begin with the raw amino-acid sequence, 455 residues long: tRNA-2-methylthio-N(6)-dimethylallyladenosine synthase (455 aa).

In terms of domain architecture, MTTase N-terminal spans 10–130 (RKVFIKTYGC…LPDALKRVRR (121 aa)). Residues C19, C55, C93, C171, C175, and C178 each coordinate [4Fe-4S] cluster. In terms of domain architecture, Radical SAM core spans 157 to 389 (RSRGVTAFLT…QALLLRQQKE (233 aa)). The 63-residue stretch at 392–454 (ESLVGKTMDV…PNSLFAEVAG (63 aa)) folds into the TRAM domain.

The protein belongs to the methylthiotransferase family. MiaB subfamily. Monomer. [4Fe-4S] cluster is required as a cofactor.

It localises to the cytoplasm. It carries out the reaction N(6)-dimethylallyladenosine(37) in tRNA + (sulfur carrier)-SH + AH2 + 2 S-adenosyl-L-methionine = 2-methylsulfanyl-N(6)-dimethylallyladenosine(37) in tRNA + (sulfur carrier)-H + 5'-deoxyadenosine + L-methionine + A + S-adenosyl-L-homocysteine + 2 H(+). Catalyzes the methylthiolation of N6-(dimethylallyl)adenosine (i(6)A), leading to the formation of 2-methylthio-N6-(dimethylallyl)adenosine (ms(2)i(6)A) at position 37 in tRNAs that read codons beginning with uridine. The chain is tRNA-2-methylthio-N(6)-dimethylallyladenosine synthase from Agrobacterium fabrum (strain C58 / ATCC 33970) (Agrobacterium tumefaciens (strain C58)).